We begin with the raw amino-acid sequence, 465 residues long: Protein maelstrom (465 aa).

A DNA-binding region (HMG box) is located at residues 2–69 (APKKHSGFMM…ADRGKRERLN (68 aa)). The segment at 415 to 440 (MRKSSKHTGPSVSTQRERNAGAWNLP) is disordered.

Belongs to the maelstrom family.

Its subcellular location is the cytoplasm. The protein resides in the nucleus. Involved both in the piRNA and miRNA metabolic processes. As a component of the meiotic nuage, plays a central role during oogenesis by repressing transposable elements and preventing their mobilization, which is essential for the germline integrity. Repression of transposable elements is mediated via the piRNA metabolic process, which mediates the repression of transposable elements during meiosis by forming complexes composed of piRNAs and Piwi proteins and governs the repression of transposons. As a nuclear component, it is required for proper differentiation in the germline stem cell (GSC) lineage by repressing microRNA-7 (miR-7), thereby acting as an indirect regulator of bag-of-marbles (Bam). Acts by binding to the promoter of miR-7 gene and repressing its expression; miR-7 repression alleviates the Bam repression by miR-7, thereby allowing differentiation in the germline stem cell (GSC) lineage. The protein is Protein maelstrom (mael) of Drosophila yakuba (Fruit fly).